The primary structure comprises 328 residues: Coiled-coil domain-containing protein 54 (328 aa).

A coiled-coil region spans residues 122–151 (TTKDILSMKEDIKALKKKVTELEKQNSYSR). Position 182 is a phosphothreonine (T182). Residues 186–197 (TDREMSSAEPEK) are compositionally biased toward basic and acidic residues. The interval 186 to 205 (TDREMSSAEPEKVPSYPKST) is disordered.

The chain is Coiled-coil domain-containing protein 54 (CCDC54) from Macaca fascicularis (Crab-eating macaque).